A 411-amino-acid polypeptide reads, in one-letter code: AT-hook motif nuclear-localized protein 14 (411 aa).

Disordered stretches follow at residues Met1 to Thr32, Ala54 to Val164, Lys289 to Gly348, and Thr366 to Asp411. Residues His7 to His19 are compositionally biased toward basic residues. The segment covering Gln20 to Gln29 has biased composition (low complexity). Polar residues predominate over residues Ala54–Gly66. Residues Lys105–Lys113 carry the Bipartite nuclear localization signal motif. A DNA-binding region (a.T hook) is located at residues Lys105–Pro117. 2 stretches are compositionally biased toward low complexity: residues Ala120–Ala135 and Val144–Ser159. A PPC domain is found at Gly165–Ser305. The segment covering Arg306–Gln315 has biased composition (polar residues). The segment covering Arg374–Asp390 has biased composition (gly residues).

It is found in the nucleus. Functionally, transcription factor that specifically binds AT-rich DNA sequences related to the nuclear matrix attachment regions (MARs). This is AT-hook motif nuclear-localized protein 14 from Arabidopsis thaliana (Mouse-ear cress).